A 492-amino-acid polypeptide reads, in one-letter code: N-succinylglutamate 5-semialdehyde dehydrogenase (492 aa).

220-225 provides a ligand contact to NAD(+); sequence GSANTG. Catalysis depends on residues glutamate 243 and cysteine 277.

The protein belongs to the aldehyde dehydrogenase family. AstD subfamily.

It catalyses the reaction N-succinyl-L-glutamate 5-semialdehyde + NAD(+) + H2O = N-succinyl-L-glutamate + NADH + 2 H(+). It participates in amino-acid degradation; L-arginine degradation via AST pathway; L-glutamate and succinate from L-arginine: step 4/5. Its function is as follows. Catalyzes the NAD-dependent reduction of succinylglutamate semialdehyde into succinylglutamate. In Escherichia coli O17:K52:H18 (strain UMN026 / ExPEC), this protein is N-succinylglutamate 5-semialdehyde dehydrogenase.